A 256-amino-acid polypeptide reads, in one-letter code: Major prion protein 2 (256 aa).

A signal peptide spans methionine 1–cysteine 24. Residues lysine 25–alanine 233 form an interaction with GRB2, ERI3 and SYN1 region. Positions proline 28–threonine 110 are disordered. Tandem repeats lie at residues proline 54–glutamine 62, proline 63–glutamine 70, proline 71–glutamine 78, proline 79–glutamine 86, and proline 87–glutamine 95. The tract at residues proline 54–glutamine 95 is 5 X 8 AA tandem repeats of P-H-G-G-G-W-G-Q. The span at glycine 58 to histidine 99 shows a compositional bias: gly residues. Cu(2+) contacts are provided by histidine 64, glycine 65, glycine 66, histidine 72, glycine 74, histidine 80, glycine 81, glycine 82, histidine 88, glycine 90, and glycine 91. Residues cysteine 182 and cysteine 217 are joined by a disulfide bond. 2 N-linked (GlcNAc...) asparagine glycosylation sites follow: asparagine 184 and asparagine 200. Alanine 233 carries GPI-anchor amidated alanine lipidation. The propeptide at serine 234 to glycine 256 is removed in mature form.

This sequence belongs to the prion family. Monomer and homodimer. Has a tendency to aggregate into amyloid fibrils containing a cross-beta spine, formed by a steric zipper of superposed beta-strands. Soluble oligomers may represent an intermediate stage on the path to fibril formation. Copper binding may promote oligomerization. Interacts with GRB2, APP, ERI3/PRNPIP and SYN1. Mislocalized cytosolically exposed PrP interacts with MGRN1; this interaction alters MGRN1 subcellular location and causes lysosomal enlargement. Interacts with KIAA1191.

It is found in the cell membrane. Its subcellular location is the golgi apparatus. Functionally, its primary physiological function is unclear. Has cytoprotective activity against internal or environmental stresses. May play a role in neuronal development and synaptic plasticity. May be required for neuronal myelin sheath maintenance. May play a role in iron uptake and iron homeostasis. Soluble oligomers are toxic to cultured neuroblastoma cells and induce apoptosis (in vitro). Association with GPC1 (via its heparan sulfate chains) targets PRNP to lipid rafts. Also provides Cu(2+) or Zn(2+) for the ascorbate-mediated GPC1 deaminase degradation of its heparan sulfate side chains. The polypeptide is Major prion protein 2 (Tragelaphus strepsiceros (Greater kudu)).